We begin with the raw amino-acid sequence, 231 residues long: Sporulation protein RMD6 (231 aa).

The protein localises to the peroxisome. Its function is as follows. Required for sporulation. Required for meiotic nuclear division. The polypeptide is Sporulation protein RMD6 (RMD6) (Saccharomyces cerevisiae (strain ATCC 204508 / S288c) (Baker's yeast)).